Reading from the N-terminus, the 323-residue chain is Olfactory receptor 51S1 (323 aa).

The Extracellular segment spans residues 1–33 (MSTLPTQIAPNSSTSMAPTFLLVGMPGLSGAPS). N-linked (GlcNAc...) asparagine glycosylation occurs at N11. The helical transmembrane segment at 34–54 (WWTLPLIAVYLLSALGNGTIL) threads the bilayer. At 55–62 (WIIALQPA) the chain is on the cytoplasmic side. Residues 63–83 (LHRPMHFFLFLLSVSDIGLVT) form a helical membrane-spanning segment. Topologically, residues 84 to 107 (ALMPTLLGIALAGAHTVPASACLL) are extracellular. Residues C105 and C197 are joined by a disulfide bond. The helical transmembrane segment at 108–128 (QMVFIHVFSVMESSVLLAMSI) threads the bilayer. The Cytoplasmic portion of the chain corresponds to 129 to 147 (DRALAICRPLHYPALLTNG). The helical transmembrane segment at 148 to 168 (VISKISLAISFRCLGLHLPLP) threads the bilayer. The Extracellular segment spans residues 169 to 203 (FLLAYMPYCLPQVLTHSYCLHPDVARLACPEAWGA). A helical transmembrane segment spans residues 204 to 224 (AYSLFVVLSAMGLDPLLIFFS). The Cytoplasmic portion of the chain corresponds to 225–244 (YGLIGKVLQGVESREDRWKA). The chain crosses the membrane as a helical span at residues 245 to 265 (GQTCAAHLSAVLLFYIPMILL). Topologically, residues 266–280 (ALINHPELPITQHTH) are extracellular. A helical transmembrane segment spans residues 281–301 (TLLSYVHFLLPPLINPILYSV). At 302 to 323 (KMKEIRKRILNRLQPRKVGGAQ) the chain is on the cytoplasmic side.

This sequence belongs to the G-protein coupled receptor 1 family.

The protein localises to the cell membrane. Odorant receptor. In Homo sapiens (Human), this protein is Olfactory receptor 51S1 (OR51S1).